The primary structure comprises 138 residues: MKHQRGYSLIEVIVAFALLALALTLLLGSLSGAARQVRGADDSTRATLHAQSLLAVQGMEQPLVPGQQQGSLEDGHFRWSLDVRPYDEPRRNAQAPVDPSAPTLLQLTLVVRWGEQPNQRLLWRTLRLVTATAQGNPA.

Residues 1-6 (MKHQRG) constitute a propeptide, leader sequence. Tyr7 carries the N-methyltyrosine modification. Residues 7–29 (YSLIEVIVAFALLALALTLLLGS) traverse the membrane as a helical segment.

This sequence belongs to the GSP I family. As to quaternary structure, type II secretion is composed of four main components: the outer membrane complex, the inner membrane complex, the cytoplasmic secretion ATPase and the periplasm-spanning pseudopilus. Interacts with core component XpsG. Cleaved by prepilin peptidase. In terms of processing, methylated by prepilin peptidase at the amino group of the N-terminal tyrosine once the leader sequence is cleaved by prepilin peptidase.

The protein resides in the cell inner membrane. Its function is as follows. Component of the type II secretion system required for the energy-dependent secretion of extracellular factors such as proteases and toxins from the periplasm. Part of the pseudopilus tip complex that is critical for the recognition and binding of secretion substrates. The sequence is that of Type II secretion system protein I (xpsI) from Xanthomonas campestris pv. campestris (strain ATCC 33913 / DSM 3586 / NCPPB 528 / LMG 568 / P 25).